A 971-amino-acid chain; its full sequence is U2 snRNP component HSH155 (971 aa).

Disordered regions lie at residues 1-22 (MSHPIQFVNANNSDKSHQLGGQ) and 54-118 (TRTV…AVKE). Over residues 8-22 (VNANNSDKSHQLGGQ) the composition is skewed to polar residues. Residues 54–75 (TRTVQNREDSYHKRRFDMKFEP) show a composition bias toward basic and acidic residues. A compositionally biased stretch (polar residues) spans 78-90 (DTQTVTSSENTQD). HEAT repeat units lie at residues 199-237 (MIFNRLLPILLDRSLEDQERHLMIKTIDRVLYQLGDLTK), 273-310 (AGLKTILTVMRPDIENEDEYVRNVTSRAAAVVAKALGV), 350-387 (NHLTGLMSCIKDCLMDDHVPVRIVTAHTLSTLAENSYP), 513-550 (LGCSYTIDKLLTPLRDEAEPFRTMAVHAVTRTVNLLGT), 596-633 (PFLAPIVSTILNHLKHKTPLVRQHAADLCAILIPVIKN), 680-717 (PPINQILPTLTPILRNKHRKVEVNTIKFVGLIGKLAPT), 722-759 (KEWMRICFELLELLKSTNKEIRRSANATFGFIAEAIGP), 792-829 (CGPYNVLPVIMNEYTTPETNVQNGVLKAMSFMFEYIGN), and 832-870 (KDYIYFITPLLEDALTDRDLVHRQTASNVITHLALNCSG).

The protein belongs to the SF3B1 family. In terms of assembly, belongs to the CWC complex (or CEF1-associated complex), a spliceosome sub-complex reminiscent of a late-stage spliceosome composed of the U2, U5 and U6 snRNAs and at least BUD13, BUD31, BRR2, CDC40, CEF1, CLF1, CUS1, CWC2, CWC15, CWC21, CWC22, CWC23, CWC24, CWC25, CWC27, ECM2, HSH155, IST3, ISY1, LEA1, MSL1, NTC20, PRP8, PRP9, PRP11, PRP19, PRP21, PRP22, PRP45, PRP46, SLU7, SMB1, SMD1, SMD2, SMD3, SMX2, SMX3, SNT309, SNU114, SPP2, SYF1, SYF2, RSE1 and YJU2. Interacts with RDS3.

It is found in the nucleus. Functionally, contacts pre-mRNA on both sides of the branch site early in spliceosome assembly. The polypeptide is U2 snRNP component HSH155 (HSH155) (Saccharomyces cerevisiae (strain ATCC 204508 / S288c) (Baker's yeast)).